The following is a 633-amino-acid chain: Molybdenum cofactor biosynthesis protein 1 (633 aa).

The tract at residues 1–380 is molybdenum cofactor biosynthesis protein A; that stretch reads MAAQPVSRVV…QMKNRPMILI (380 aa). Serine 61 bears the Phosphoserine mark. The Radical SAM core domain occupies 61–295; that stretch reads SFGRHHSYLR…AKAFKIPGFR (235 aa). Arginine 70 serves as a coordination point for GTP. Residues cysteine 77 and cysteine 81 each coordinate [4Fe-4S] cluster. Tyrosine 83 is an S-adenosyl-L-methionine binding site. Position 84 (cysteine 84) interacts with [4Fe-4S] cluster. Arginine 120 serves as a coordination point for GTP. An S-adenosyl-L-methionine-binding site is contributed by glycine 124. Threonine 151 provides a ligand contact to GTP. Residue serine 175 coordinates S-adenosyl-L-methionine. Lysine 195 carries the post-translational modification N6-acetyllysine. Lysine 212 serves as a coordination point for GTP. Methionine 246 serves as a coordination point for S-adenosyl-L-methionine. Residues cysteine 309 and cysteine 312 each contribute to the [4Fe-4S] cluster site. 314 to 316 contacts GTP; sequence RLR. [4Fe-4S] cluster is bound at residue cysteine 326. Positions 410-633 are molybdenum cofactor biosynthesis protein C; sequence VSFSSQMVTL…GGQRGDFHRT (224 aa). A disordered region spans residues 446 to 480; sequence SSHLDSDANPKCLSPTEPQAPAASSGPLPDSDQLT. Residue lysine 525 is modified to N6-acetyllysine. The For molybdenum cofactor biosynthesis protein C activity role is filled by aspartate 603.

In the C-terminal section; belongs to the MoaC family. The protein in the N-terminal section; belongs to the radical SAM superfamily. MoaA family. Isoform MOCS1A and isoform MOCS1B probably form a heterooligomer. [4Fe-4S] cluster serves as cofactor.

The enzyme catalyses GTP + AH2 + S-adenosyl-L-methionine = (8S)-3',8-cyclo-7,8-dihydroguanosine 5'-triphosphate + 5'-deoxyadenosine + L-methionine + A + H(+). It catalyses the reaction (8S)-3',8-cyclo-7,8-dihydroguanosine 5'-triphosphate = cyclic pyranopterin phosphate + diphosphate. It participates in cofactor biosynthesis; molybdopterin biosynthesis. Functionally, isoform MOCS1A and isoform MOCS1B probably form a complex that catalyzes the conversion of 5'-GTP to cyclic pyranopterin monophosphate (cPMP). MOCS1A catalyzes the cyclization of GTP to (8S)-3',8-cyclo-7,8-dihydroguanosine 5'-triphosphate and MOCS1B catalyzes the subsequent conversion of (8S)-3',8-cyclo-7,8-dihydroguanosine 5'-triphosphate to cPMP. This chain is Molybdenum cofactor biosynthesis protein 1 (MOCS1), found in Bos taurus (Bovine).